The primary structure comprises 320 residues: Phospho-N-acetylmuramoyl-pentapeptide-transferase (320 aa).

9 helical membrane passes run 5–25, 51–71, 75–95, 121–141, 143–163, 176–196, 198–218, 241–261, and 300–320; these read FWAF…VIKF, MGGA…SVAY, IGFV…IIGG, LCAV…ILNI, FIGV…WLVG, GLLT…ALGV, NHII…FLLF, IESI…IFVI, and IDAL…LYMS.

The protein belongs to the glycosyltransferase 4 family. MraY subfamily. Mg(2+) is required as a cofactor.

The protein localises to the cell membrane. It catalyses the reaction UDP-N-acetyl-alpha-D-muramoyl-L-alanyl-gamma-D-glutamyl-L-lysyl-D-alanyl-D-alanine + di-trans,octa-cis-undecaprenyl phosphate = Mur2Ac(oyl-L-Ala-gamma-D-Glu-L-Lys-D-Ala-D-Ala)-di-trans,octa-cis-undecaprenyl diphosphate + UMP. Its pathway is cell wall biogenesis; peptidoglycan biosynthesis. Functionally, catalyzes the initial step of the lipid cycle reactions in the biosynthesis of the cell wall peptidoglycan: transfers peptidoglycan precursor phospho-MurNAc-pentapeptide from UDP-MurNAc-pentapeptide onto the lipid carrier undecaprenyl phosphate, yielding undecaprenyl-pyrophosphoryl-MurNAc-pentapeptide, known as lipid I. This Leuconostoc mesenteroides subsp. mesenteroides (strain ATCC 8293 / DSM 20343 / BCRC 11652 / CCM 1803 / JCM 6124 / NCDO 523 / NBRC 100496 / NCIMB 8023 / NCTC 12954 / NRRL B-1118 / 37Y) protein is Phospho-N-acetylmuramoyl-pentapeptide-transferase.